The sequence spans 518 residues: E3 ubiquitin-protein ligase TRIM39 (518 aa).

The RING-type zinc finger occupies 29 to 70 (CSVCLEYLKEPVIIECGHNFCKACITRWWEDLERDFPCPVCR). The B box-type zinc-finger motif lies at 102-143 (RDESLCPQHHEALSLFCYEDQEAVCLICAISHTHRAHTVVPL). The Zn(2+) site is built by Cys107, His110, Cys129, and His135. Positions 181–250 (ELKRLVESRR…AHLAAEVEGK (70 aa)) form a coiled coil. Interaction with CDKN1A stretches follow at residues 268–337 (KNIP…QLIA) and 389–518 (TSGR…TDWE). The B30.2/SPRY domain occupies 319 to 514 (SNFPRQYFAL…NAAPLTIRPP (196 aa)).

The protein belongs to the TRIM/RBCC family. As to quaternary structure, interacts with MOAP1. Interacts with CDKN1A. In terms of processing, autoubiquitinated.

The protein localises to the cytoplasm. It localises to the cytosol. The protein resides in the mitochondrion. It is found in the nucleus. The enzyme catalyses S-ubiquitinyl-[E2 ubiquitin-conjugating enzyme]-L-cysteine + [acceptor protein]-L-lysine = [E2 ubiquitin-conjugating enzyme]-L-cysteine + N(6)-ubiquitinyl-[acceptor protein]-L-lysine.. Its pathway is protein modification; protein ubiquitination. Functionally, E3 ubiquitin-protein ligase. May facilitate apoptosis by inhibiting APC/C-Cdh1-mediated poly-ubiquitination and subsequent proteasome-mediated degradation of the pro-apoptotic protein MOAP1. Regulates the G1/S transition of the cell cycle and DNA damage-induced G2 arrest by stabilizing CDKN1A/p21. Positively regulates CDKN1A/p21 stability by competing with DTL for CDKN1A/p21 binding, therefore disrupting DCX(DTL) E3 ubiquitin ligase complex-mediated CDKN1A/p21 ubiquitination and degradation. In Pan troglodytes (Chimpanzee), this protein is E3 ubiquitin-protein ligase TRIM39 (TRIM39).